The sequence spans 436 residues: MPGHRSKSEKKDADKQLRRDPYEVLGVLRNSTDQEIKSAYRKLALKYHPDKTANDPVAADMFKEVTFSYNILSDPEKRRQFDSAGFEAVEAESQELELDLSSLGAVNTVFAALFSKLGVPIKTSVSATILEEALNGRVSVDPLVLGQAVSKKVEKQCAHFYAVTISEEEVSAGLVCRVESSSKSKFKLLYFDQEANSGLSLALQEDSKRTGKITSAGMYFLGFPVYRLDHTINSMAQAKDPETAFFKKLDGFQQCEVTELKAGTHVFAVYGDNFFKNVSYTIQVLCAAAFTQEKEDLRSVEAQILTKRAELAKFETEYREVLVQFTDMTSRYAQEMQSIDELLKQRNEIHSAYTTIPLMKRSSSKNRMRKSSFKKAAAKAPAPTEQEEEEEEEEEEEEESSRQKNKKPSTCDKSETLKKKSKWFNLHLKLDKKKPC.

One can recognise a J domain in the interval 20–85; it reads DPYEVLGVLR…EKRRQFDSAG (66 aa). Positions 291–348 form a coiled coil; sequence TQEKEDLRSVEAQILTKRAELAKFETEYREVLVQFTDMTSRYAQEMQSIDELLKQRNE. Residues 360-416 form a disordered region; sequence KRSSSKNRMRKSSFKKAAAKAPAPTEQEEEEEEEEEEEEESSRQKNKKPSTCDKSET. The span at 362 to 377 shows a compositional bias: basic residues; the sequence is SSSKNRMRKSSFKKAA. Positions 385-399 are enriched in acidic residues; it reads EQEEEEEEEEEEEEE.

The protein belongs to the DnaJ family. B/II subfamily. Expressed constitutively in seedlings, roots, leaves, stems, flowers and siliques.

The protein resides in the membrane. Plays a continuous role in plant development probably in the structural organization of compartments. Seems to not be involved in gravitropism signaling pathway. In Arabidopsis thaliana (Mouse-ear cress), this protein is Chaperone protein dnaJ 16 (ATJ16).